Reading from the N-terminus, the 169-residue chain is Thermonuclease (169 aa).

An N-terminal signal peptide occupies residues Met-1–Ser-26. Catalysis depends on residues Arg-65, Glu-73, and Arg-115.

Belongs to the thermonuclease family. Requires Ca(2+) as cofactor.

Its subcellular location is the secreted. It carries out the reaction Endonucleolytic cleavage to nucleoside 3'-phosphates and 3'-phosphooligonucleotide end-products.. Its function is as follows. Enzyme that catalyzes the hydrolysis of both DNA and RNA at the 5'-position of the phosphodiester bond. The sequence is that of Thermonuclease (nucH) from Staphylococcus hyicus.